The following is a 1032-amino-acid chain: MEEQVANAIEIASNPSADPALKTQAFDFVNQLRSDPSGWQVCLSLFTQTPQRSGIVRHVALEVVNSAAQGGLIDLQALAYVKDGLLAYLRQVYGQDAGASDPPNIQNKIAQTITFLFSALYASGWESFFDDLLGLTQKSPSSTTRDNASGIIFYLRVINSIHDEIGDVLVSRSRNEQDKANALKDLIRQRDMQKITSSWQQILSEWRDGNDVIVEMCLKAVGSWVSWIDIGLVVNQTMLDLLFRQLGRAQKEDLRQGEEKVRDAAVDVFTEIIGKKMKPEDKIDMIIFLNLDTIVSQLSNSPPLHGNRFTFKYDTDLAETVAKLVNITVIDIVRALEQEGVSTECKEKANGLLQAFLPHILRYFSDEYDEVCSTVIPCVSDLLTYLRRIAKVNPALASQHSSILLPILKAIIAKMRYDETSSWGEEDEQTDEAEFQELRKRLGILQQMIASINEQLYMEVVSEMVATTFENLRQSGSQMDWRDLDLALHEMFLFGDLAVKAGSLYTKGNPNNQAAERLIEMMLRMVESDIRSFTHPATQLQYTEICVRYSSFFHHHTHLIPGVLENFLQLVHHPIKKVKTRSWYLFQRLVKQLRQYVGNVAQTVVEALGDLLVIRAELPSEVSEGDEMSSEDHELADAIFNSQLYLFEAVGIICSTPTISPDKQVLYLQAVLNPIFLDMEKNLEAAKSQDERAILQIHHDIMALGTLARGFSDWMPGTNTPATLPAPEVSAAFNQVAEATLVALESLKSSFNVRTAARFAFSRLIGVLGSRILPQLPRWIDGLLTQTSSRDEMALFLRLLDQVIFGFKGEIFSILDTLLTPFLQRVFSGIADPTTGTDDEIQLAELKREYLNFLLAVLNNDLGAVIISERNQPIFETVISTIEHFSKDIDDFTTAKMAFSVLSKMSSSWGGPDVIAEASNGTPPSQAPLPGFGQFMITRFSPLCWALPSTPSFNSKDAQAKQVLAEAGGLQRTIYAKTGMEYLTYLRDRELPGMGMGGELIEEFVGALSRLDLKGFRQFFPVCLSNFHILSI.

It belongs to the exportin family.

It localises to the nucleus. The protein localises to the cytoplasm. Functionally, tRNA nucleus export receptor which facilitates tRNA translocation across the nuclear pore complex. Involved in pre-tRNA splicing, probably by affecting the interaction of pre-tRNA with splicing endonuclease. The protein is Exportin-T (los1) of Aspergillus fumigatus (strain CBS 144.89 / FGSC A1163 / CEA10) (Neosartorya fumigata).